Consider the following 142-residue polypeptide: Small ribosomal subunit protein bS6 (142 aa).

A disordered region spans residues 110 to 142 (NKKPSHAKEKHEKTEHAHSHHAEEAKSTESHSE).

This sequence belongs to the bacterial ribosomal protein bS6 family.

Binds together with bS18 to 16S ribosomal RNA. The polypeptide is Small ribosomal subunit protein bS6 (Helicobacter pylori (strain G27)).